We begin with the raw amino-acid sequence, 174 residues long: Adenine phosphoribosyltransferase (174 aa).

It belongs to the purine/pyrimidine phosphoribosyltransferase family. Homodimer.

The protein localises to the cytoplasm. It catalyses the reaction AMP + diphosphate = 5-phospho-alpha-D-ribose 1-diphosphate + adenine. It participates in purine metabolism; AMP biosynthesis via salvage pathway; AMP from adenine: step 1/1. In terms of biological role, catalyzes a salvage reaction resulting in the formation of AMP, that is energically less costly than de novo synthesis. In Photobacterium profundum (strain SS9), this protein is Adenine phosphoribosyltransferase.